Reading from the N-terminus, the 229-residue chain is Heptaprenylglyceryl phosphate synthase (229 aa).

Lys12 is a sn-glycerol 1-phosphate binding site. Residues Asp14 and Ser40 each contribute to the Mg(2+) site. Residues 159–164, Gly189, and 209–210 each bind sn-glycerol 1-phosphate; these read YLEYSG and GN.

It belongs to the GGGP/HepGP synthase family. Group I subfamily. Homodimer. Requires Mg(2+) as cofactor.

The catalysed reaction is sn-glycerol 1-phosphate + all-trans-heptaprenyl diphosphate = 3-heptaprenyl-sn-glycero-1-phosphate + diphosphate. Its pathway is membrane lipid metabolism; glycerophospholipid metabolism. Its function is as follows. Prenyltransferase that catalyzes in vivo the transfer of the heptaprenyl moiety of heptaprenyl pyrophosphate (HepPP; 35 carbon atoms) to the C3 hydroxyl of sn-glycerol-1-phosphate (G1P), producing heptaprenylglyceryl phosphate (HepGP). This reaction is an ether-bond-formation step in the biosynthesis of archaea-type G1P-based membrane lipids found in Bacillales. The sequence is that of Heptaprenylglyceryl phosphate synthase from Bacillus cereus (strain AH187).